The chain runs to 427 residues: Histidine--tRNA ligase (427 aa).

This sequence belongs to the class-II aminoacyl-tRNA synthetase family. In terms of assembly, homodimer.

Its subcellular location is the cytoplasm. The enzyme catalyses tRNA(His) + L-histidine + ATP = L-histidyl-tRNA(His) + AMP + diphosphate + H(+). This chain is Histidine--tRNA ligase, found in Mannheimia succiniciproducens (strain KCTC 0769BP / MBEL55E).